The chain runs to 273 residues: 3-methyl-2-oxobutanoate hydroxymethyltransferase (273 aa).

The Mg(2+) site is built by D49 and D88. Residues 49–50, D88, and K118 each bind 3-methyl-2-oxobutanoate; that span reads DS. E120 contributes to the Mg(2+) binding site. The Proton acceptor role is filled by E187.

This sequence belongs to the PanB family. In terms of assembly, homodecamer; pentamer of dimers. Mg(2+) serves as cofactor.

Its subcellular location is the cytoplasm. It carries out the reaction 3-methyl-2-oxobutanoate + (6R)-5,10-methylene-5,6,7,8-tetrahydrofolate + H2O = 2-dehydropantoate + (6S)-5,6,7,8-tetrahydrofolate. The protein operates within cofactor biosynthesis; (R)-pantothenate biosynthesis; (R)-pantoate from 3-methyl-2-oxobutanoate: step 1/2. In terms of biological role, catalyzes the reversible reaction in which hydroxymethyl group from 5,10-methylenetetrahydrofolate is transferred onto alpha-ketoisovalerate to form ketopantoate. The sequence is that of 3-methyl-2-oxobutanoate hydroxymethyltransferase from Sinorhizobium fredii (strain NBRC 101917 / NGR234).